The sequence spans 69 residues: Dermaseptin-H3 (69 aa).

The signal sequence occupies residues 1–22 (MAFLKKSLFLVLFLGMVSLSIC). The propeptide occupies 23–43 (EEEKRENEDEEKQEDDEQSEM). Residues 24–44 (EEKRENEDEEKQEDDEQSEMK) form a disordered region. A compositionally biased stretch (acidic residues) spans 30–40 (EDEEKQEDDEQ). Leu-66 carries the post-translational modification Leucine amide. The propeptide occupies 68–69 (EQ).

This sequence belongs to the frog skin active peptide (FSAP) family. Dermaseptin subfamily. In terms of tissue distribution, expressed by the skin glands.

It localises to the secreted. Possesses a potent antimicrobial activity against Gram-positive and Gram-negative bacteria. Probably acts by disturbing membrane functions with its amphipathic structure. This chain is Dermaseptin-H3, found in Pithecopus azureus (Orange-legged monkey tree frog).